The following is a 345-amino-acid chain: C5a anaphylatoxin chemotactic receptor 1 (345 aa).

Over 1–32 (MMVTVSYDYDYNSTFLPDGFVDNYVERLSFGD) the chain is Extracellular. A sulfotyrosine mark is found at Tyr9 and Tyr11. Asn12 is a glycosylation site (N-linked (GlcNAc...) asparagine). A helical transmembrane segment spans residues 33 to 59 (LVAVVIMVVVFLVGVPGNALVVWVTAC). Residues 60-64 (EARRH) are Cytoplasmic-facing. The helical transmembrane segment at 65-88 (INAIWFLNLAAADLLSCLALPILL) threads the bilayer. Topologically, residues 89–105 (VSTVHLNHWYFGDTACK) are extracellular. The cysteines at positions 104 and 183 are disulfide-linked. The chain crosses the membrane as a helical span at residues 106 to 127 (VLPSLILLNMYTSILLLATISA). The Cytoplasmic segment spans residues 128 to 148 (DRLLLVLSPIWCQRFRGGCLA). A helical transmembrane segment spans residues 149–169 (WTACGLAWVLALLLSSPSFLY). The Extracellular segment spans residues 170–195 (RRTHNEHFSFKVYCVTDYGRDISKER). Residues 196 to 221 (AVALVRLLVGFIVPLITLTACYTFLL) traverse the membrane as a helical segment. The Cytoplasmic segment spans residues 222 to 237 (LRTWSRKATRSAKTVK). The chain crosses the membrane as a helical span at residues 238 to 260 (VVVAVVSSFFVFWLPYQVTGILL). Over 261–277 (AWHSPNSATYRNTKALD) the chain is Extracellular. A helical membrane pass occupies residues 278–298 (AVCVAFAYINCCINPIIYVVA). Over 299 to 345 (GHGFQGRLLKSLPSVLRNVLTEESLDKRHQSFARSTVDTMPQKSESV) the chain is Cytoplasmic. Phosphoserine occurs at positions 309, 312, 322, 329, and 333.

The protein belongs to the G-protein coupled receptor 1 family. Homodimer. May also form higher-order oligomers. Interacts (when phosphorylated) with ARRB1 and ARRB2; the interaction is associated with internalization of C5aR. Sulfation plays a critical role in the association of C5aR with C5a, but no significant role in the ability of the receptor to transduce a signal and mobilize calcium in response to a small peptide agonist. In terms of processing, phosphorylated on serine residues in response to C5a binding, resulting in internalization of the receptor and short-term desensitization to C5a. As to expression, expressed strongly in macrophages and spleen. Weak expression detected in lung, liver, brain, heart and kidney.

The protein localises to the cell membrane. It is found in the cytoplasmic vesicle. In terms of biological role, receptor for the chemotactic and inflammatory peptide anaphylatoxin C5a. The ligand interacts with at least two sites on the receptor: a high-affinity site on the extracellular N-terminus, and a second site in the transmembrane region which activates downstream signaling events. Receptor activation stimulates chemotaxis, granule enzyme release, intracellular calcium release and superoxide anion production. The polypeptide is C5a anaphylatoxin chemotactic receptor 1 (C5AR1) (Cavia porcellus (Guinea pig)).